A 220-amino-acid polypeptide reads, in one-letter code: Uracil-DNA glycosylase (220 aa).

Asp-65 functions as the Proton acceptor in the catalytic mechanism.

The protein belongs to the uracil-DNA glycosylase (UDG) superfamily. UNG family.

It is found in the cytoplasm. The catalysed reaction is Hydrolyzes single-stranded DNA or mismatched double-stranded DNA and polynucleotides, releasing free uracil.. In terms of biological role, excises uracil residues from the DNA which can arise as a result of misincorporation of dUMP residues by DNA polymerase or due to deamination of cytosine. This is Uracil-DNA glycosylase from Bacteroides thetaiotaomicron (strain ATCC 29148 / DSM 2079 / JCM 5827 / CCUG 10774 / NCTC 10582 / VPI-5482 / E50).